A 593-amino-acid polypeptide reads, in one-letter code: ETS-related transcription factor Elf-2 (593 aa).

Ser107 carries the post-translational modification Phosphoserine. The interval 146–201 (VEVSTEESEPMDTSPIPTSPDSHEPMKKKKVGRKPKTQQSPISNGSPELGIKKKPR) is disordered. The segment covering 171–181 (MKKKKVGRKPK) has biased composition (basic residues). Position 182 is a phosphothreonine (Thr182). A compositionally biased stretch (polar residues) spans 182–191 (TQQSPISNGS). 2 positions are modified to phosphoserine: Ser185 and Ser191. A DNA-binding region (ETS) is located at residues 208 to 290 (TYLWEFLLDL…EGQRLVYQFK (83 aa)). 2 positions are modified to phosphoserine: Ser363 and Ser372. Thr376 is modified (phosphothreonine). At Ser430 the chain carries Phosphoserine. Position 494 is an omega-N-methylarginine (Arg494). Thr521 carries the post-translational modification Phosphothreonine. Lys536 is covalently cross-linked (Glycyl lysine isopeptide (Lys-Gly) (interchain with G-Cter in SUMO2)).

It belongs to the ETS family. Interacts with the LIM domains of LMO2. Interacts via its N-terminal region with RUNX1. Expressed in all fetal and adult tissues examined. Among fetal tissues, highest levels of expression detected in heart, lung, liver and kidney, and lower levels in brain. Among adult tissues, highest levels of expression detected in heart, placenta, lung, skeletal muscle, spleen, thymus, testis and ovary. Moderate expression in prostate, small intestine, kidney, liver and pancreas, and weak expression in colon, brain and peripheral blood lymphocytes.

It localises to the nucleus. Its function is as follows. Isoform 1 transcriptionally activates the LYN and BLK promoters and acts synergistically with RUNX1 to transactivate the BLK promoter. Isoform 2 may function in repression of RUNX1-mediated transactivation. This is ETS-related transcription factor Elf-2 from Homo sapiens (Human).